A 1187-amino-acid chain; its full sequence is Phospholipid-transporting ATPase IH (1187 aa).

The Cytoplasmic segment spans residues 1-61 (MDCSLLRTLV…SSKYTFWNFI (61 aa)). The chain crosses the membrane as a helical span at residues 62–82 (PKNLFEQFRRIANFYFLIIFL). Residues 83-88 (VQLIID) are Extracellular-facing. A helical membrane pass occupies residues 89–110 (TPTSPVTSGLPLFFVITVTAIK). The Cytoplasmic portion of the chain corresponds to 111–296 (QGYEDWLRHK…SAVEKSMNTF (186 aa)). Residues 297-318 (LIVYLCILVSKALINTVLKYVW) form a helical membrane-spanning segment. Over 319–349 (QSEPFRDEPWYNEKTESERQRNLFLRAFTDF) the chain is Extracellular. A helical membrane pass occupies residues 350 to 372 (LAFMVLFNYIIPVSMYVTVEMQK). At 373–884 (FLGSYFITWD…GHFYYIRISE (512 aa)) the chain is on the cytoplasmic side. Asp-414 (4-aspartylphosphate intermediate) is an active-site residue. ATP-binding residues include Asp-414, Lys-415, Thr-416, Glu-513, Phe-555, Lys-578, Arg-609, Thr-689, Gly-690, and Asp-691. Asp-414 serves as a coordination point for Mg(2+). Thr-416 serves as a coordination point for Mg(2+). Ser-740 is subject to Phosphoserine. ATP-binding residues include Arg-801 and Lys-807. Asp-828 is a Mg(2+) binding site. The ATP site is built by Asn-831 and Asp-832. Residue Asp-832 participates in Mg(2+) binding. The chain crosses the membrane as a helical span at residues 885–905 (LVQYFFYKNVCFIFPQFLYQF). At 906-917 (FCGFSQQTLYDT) the chain is on the extracellular side. The helical transmembrane segment at 918 to 937 (AYLTLYNISFTSLPILLYSL) threads the bilayer. Over 938–967 (MEQHVGIDVLKRDPTLYRDIAKNALLRWRV) the chain is Cytoplasmic. A helical membrane pass occupies residues 968–989 (FIYWTFLGVFDALVFFFGAYFI). Topologically, residues 990–1003 (FENTTVTINGQMFG) are extracellular. The chain crosses the membrane as a helical span at residues 1004–1026 (NWTFGTLVFTVMVLTVTLKLALD). Over 1027–1032 (THYWTW) the chain is Cytoplasmic. Residues 1033 to 1053 (INHFVIWGSLLFYIAFSLLWG) form a helical membrane-spanning segment. Topologically, residues 1054–1071 (GVIWPFLSYQRMYYVFIS) are extracellular. The helical transmembrane segment at 1072-1096 (MLSSGPAWLGIILLVTVGLLPDVLK) threads the bilayer. Residues 1097–1138 (KVLCRQLWPTATERTQNIQHQDSISEFTPLASLPSWGAQGSR) are Cytoplasmic-facing. Ser-1148 and Ser-1158 each carry phosphoserine.

This sequence belongs to the cation transport ATPase (P-type) (TC 3.A.3) family. Type IV subfamily. As to quaternary structure, component of a P4-ATPase flippase complex which consists of a catalytic alpha subunit ATP11A and an accessory beta subunit TMEM30A. Mg(2+) serves as cofactor. Proteolytically cleaved by CASP3. In terms of tissue distribution, widely expressed. Expressed in myoblasts. Expressed in retina, brain, liver, testes and kidney (at protein level). Expressed in the inner ear.

The protein resides in the cell membrane. It localises to the early endosome. Its subcellular location is the recycling endosome. It is found in the endoplasmic reticulum membrane. The enzyme catalyses ATP + H2O + phospholipidSide 1 = ADP + phosphate + phospholipidSide 2.. It carries out the reaction a 1,2-diacyl-sn-glycero-3-phospho-L-serine(out) + ATP + H2O = a 1,2-diacyl-sn-glycero-3-phospho-L-serine(in) + ADP + phosphate + H(+). It catalyses the reaction a 1,2-diacyl-sn-glycero-3-phosphoethanolamine(out) + ATP + H2O = a 1,2-diacyl-sn-glycero-3-phosphoethanolamine(in) + ADP + phosphate + H(+). Functionally, catalytic component of a P4-ATPase flippase complex which catalyzes the hydrolysis of ATP coupled to the transport of aminophospholipids, phosphatidylserines (PS) and phosphatidylethanolamines (PE), from the outer to the inner leaflet of the plasma membrane. Does not show flippase activity toward phosphatidylcholine (PC). Contributes to the maintenance of membrane lipid asymmetry with a specific role in morphogenesis of muscle cells. In myoblasts, mediates PS enrichment at the inner leaflet of plasma membrane, triggering PIEZO1-dependent Ca2+ influx and Rho GTPases signal transduction, subsequently leading to the assembly of cortical actomyosin fibers and myotube formation. This is Phospholipid-transporting ATPase IH (Atp11a) from Mus musculus (Mouse).